Here is a 299-residue protein sequence, read N- to C-terminus: Oxygen-dependent coproporphyrinogen-III oxidase (299 aa).

Residue Ser-92 participates in substrate binding. A divalent metal cation contacts are provided by His-96 and His-106. His-106 (proton donor) is an active-site residue. 108–110 (NVR) provides a ligand contact to substrate. Positions 145 and 175 each coordinate a divalent metal cation. The tract at residues 240-275 (YVEFNLVWDRGTLFGLQTGGRTESILMSMPPLVRWE) is important for dimerization. Residue 258–260 (GGR) participates in substrate binding.

It belongs to the aerobic coproporphyrinogen-III oxidase family. As to quaternary structure, homodimer. The cofactor is a divalent metal cation.

The protein localises to the cytoplasm. The enzyme catalyses coproporphyrinogen III + O2 + 2 H(+) = protoporphyrinogen IX + 2 CO2 + 2 H2O. It functions in the pathway porphyrin-containing compound metabolism; protoporphyrin-IX biosynthesis; protoporphyrinogen-IX from coproporphyrinogen-III (O2 route): step 1/1. Its function is as follows. Involved in the heme biosynthesis. Catalyzes the aerobic oxidative decarboxylation of propionate groups of rings A and B of coproporphyrinogen-III to yield the vinyl groups in protoporphyrinogen-IX. This chain is Oxygen-dependent coproporphyrinogen-III oxidase, found in Salmonella paratyphi B (strain ATCC BAA-1250 / SPB7).